A 485-amino-acid polypeptide reads, in one-letter code: Glutamyl-tRNA(Gln) amidotransferase subunit A (485 aa).

Active-site charge relay system residues include lysine 79 and serine 154. The active-site Acyl-ester intermediate is the serine 178.

It belongs to the amidase family. GatA subfamily. Heterotrimer of A, B and C subunits.

The catalysed reaction is L-glutamyl-tRNA(Gln) + L-glutamine + ATP + H2O = L-glutaminyl-tRNA(Gln) + L-glutamate + ADP + phosphate + H(+). Functionally, allows the formation of correctly charged Gln-tRNA(Gln) through the transamidation of misacylated Glu-tRNA(Gln) in organisms which lack glutaminyl-tRNA synthetase. The reaction takes place in the presence of glutamine and ATP through an activated gamma-phospho-Glu-tRNA(Gln). In Clostridium botulinum (strain Alaska E43 / Type E3), this protein is Glutamyl-tRNA(Gln) amidotransferase subunit A.